A 657-amino-acid polypeptide reads, in one-letter code: UvrABC system protein B (657 aa).

The Helicase ATP-binding domain maps to 23-414; that stretch reads KSIKKGNKYQ…KENIFHQIMR (392 aa). 36-43 serves as a coordination point for ATP; it reads GVTGSGKT. The short motif at 89-112 is the Beta-hairpin element; sequence YYDYYQPEAYIPRTDVFIEKDSST. Positions 431–593 constitute a Helicase C-terminal domain; the sequence is QVEILFDEAK…ITPTSVKRHI (163 aa). One can recognise a UVR domain in the interval 622–657; it reads AKLAKELRKQMLEAAKALEFEKAAAIRDEINKLRDL.

It belongs to the UvrB family. In terms of assembly, forms a heterotetramer with UvrA during the search for lesions. Interacts with UvrC in an incision complex.

It localises to the cytoplasm. Functionally, the UvrABC repair system catalyzes the recognition and processing of DNA lesions. A damage recognition complex composed of 2 UvrA and 2 UvrB subunits scans DNA for abnormalities. Upon binding of the UvrA(2)B(2) complex to a putative damaged site, the DNA wraps around one UvrB monomer. DNA wrap is dependent on ATP binding by UvrB and probably causes local melting of the DNA helix, facilitating insertion of UvrB beta-hairpin between the DNA strands. Then UvrB probes one DNA strand for the presence of a lesion. If a lesion is found the UvrA subunits dissociate and the UvrB-DNA preincision complex is formed. This complex is subsequently bound by UvrC and the second UvrB is released. If no lesion is found, the DNA wraps around the other UvrB subunit that will check the other stand for damage. The chain is UvrABC system protein B from Campylobacter jejuni (strain RM1221).